The following is a 715-amino-acid chain: Polyribonucleotide nucleotidyltransferase (715 aa).

Asp-493 and Asp-499 together coordinate Mg(2+). Positions 560–619 constitute a KH domain; sequence PRMITIKINPEKIRDVIGKGGSVIRALTEETGTTIDISDDGVVTIASTSSEGMAEAKKRI. The 69-residue stretch at 629 to 697 folds into the S1 motif domain; that stretch reads GQVYEGTVLK…EKGRVRLSAK (69 aa).

This sequence belongs to the polyribonucleotide nucleotidyltransferase family. Mg(2+) is required as a cofactor.

The protein localises to the cytoplasm. It catalyses the reaction RNA(n+1) + phosphate = RNA(n) + a ribonucleoside 5'-diphosphate. Functionally, involved in mRNA degradation. Catalyzes the phosphorolysis of single-stranded polyribonucleotides processively in the 3'- to 5'-direction. The sequence is that of Polyribonucleotide nucleotidyltransferase from Burkholderia vietnamiensis (strain G4 / LMG 22486) (Burkholderia cepacia (strain R1808)).